We begin with the raw amino-acid sequence, 225 residues long: DNA repair protein RecO (225 aa).

The protein belongs to the RecO family.

Its function is as follows. Involved in DNA repair and RecF pathway recombination. This chain is DNA repair protein RecO, found in Clostridium perfringens (strain ATCC 13124 / DSM 756 / JCM 1290 / NCIMB 6125 / NCTC 8237 / Type A).